The sequence spans 234 residues: 2,3,4,5-tetrahydropyridine-2,6-dicarboxylate N-acetyltransferase (234 aa).

Belongs to the transferase hexapeptide repeat family. DapH subfamily.

It carries out the reaction (S)-2,3,4,5-tetrahydrodipicolinate + acetyl-CoA + H2O = L-2-acetamido-6-oxoheptanedioate + CoA. The protein operates within amino-acid biosynthesis; L-lysine biosynthesis via DAP pathway; LL-2,6-diaminopimelate from (S)-tetrahydrodipicolinate (acetylase route): step 1/3. Its function is as follows. Catalyzes the transfer of an acetyl group from acetyl-CoA to tetrahydrodipicolinate. This chain is 2,3,4,5-tetrahydropyridine-2,6-dicarboxylate N-acetyltransferase, found in Leuconostoc citreum (strain KM20).